We begin with the raw amino-acid sequence, 143 residues long: Peptide methionine sulfoxide reductase MsrB (143 aa).

The MsrB domain occupies 16–139; sequence DAELRRRLTP…NSAALNFEAK (124 aa). Residues C55, C58, C104, and C107 each contribute to the Zn(2+) site. Catalysis depends on C128, which acts as the Nucleophile.

Belongs to the MsrB Met sulfoxide reductase family. The cofactor is Zn(2+).

The catalysed reaction is L-methionyl-[protein] + [thioredoxin]-disulfide + H2O = L-methionyl-(R)-S-oxide-[protein] + [thioredoxin]-dithiol. This chain is Peptide methionine sulfoxide reductase MsrB, found in Burkholderia mallei (strain NCTC 10229).